Reading from the N-terminus, the 105-residue chain is Small ribosomal subunit protein uS10 (105 aa).

Belongs to the universal ribosomal protein uS10 family. Part of the 30S ribosomal subunit.

Functionally, involved in the binding of tRNA to the ribosomes. In Maridesulfovibrio salexigens (strain ATCC 14822 / DSM 2638 / NCIMB 8403 / VKM B-1763) (Desulfovibrio salexigens), this protein is Small ribosomal subunit protein uS10.